The sequence spans 67 residues: Large ribosomal subunit protein uL29 (67 aa).

The protein belongs to the universal ribosomal protein uL29 family.

This chain is Large ribosomal subunit protein uL29, found in Alkaliphilus metalliredigens (strain QYMF).